The chain runs to 363 residues: MAP kinase kinase skh1/pek1 (363 aa).

The 265-residue stretch at 79–343 (ILYMNSLGEG…PQKMLTHPWV (265 aa)) folds into the Protein kinase domain. ATP-binding positions include 85 to 93 (LGEGVSGSV) and lysine 108. Catalysis depends on aspartate 206, which acts as the Proton acceptor. A Phosphoserine modification is found at serine 234. The residue at position 238 (threonine 238) is a Phosphothreonine.

It belongs to the protein kinase superfamily. STE Ser/Thr protein kinase family. MAP kinase kinase subfamily.

It catalyses the reaction L-seryl-[protein] + ATP = O-phospho-L-seryl-[protein] + ADP + H(+). It carries out the reaction L-threonyl-[protein] + ATP = O-phospho-L-threonyl-[protein] + ADP + H(+). The enzyme catalyses L-tyrosyl-[protein] + ATP = O-phospho-L-tyrosyl-[protein] + ADP + H(+). With respect to regulation, activated by mkh1. In terms of biological role, involved in the mkh1 signal transduction pathway that plays a role in cell wall integrity. Activates spm1/pmk1 via phosphorylation. This Schizosaccharomyces pombe (strain 972 / ATCC 24843) (Fission yeast) protein is MAP kinase kinase skh1/pek1 (skh1).